Here is a 305-residue protein sequence, read N- to C-terminus: Sulfate adenylyltransferase subunit 2 (305 aa).

This sequence belongs to the PAPS reductase family. CysD subfamily. Heterodimer composed of CysD, the smaller subunit, and CysN.

The catalysed reaction is sulfate + ATP + H(+) = adenosine 5'-phosphosulfate + diphosphate. The protein operates within sulfur metabolism; hydrogen sulfide biosynthesis; sulfite from sulfate: step 1/3. Functionally, with CysN forms the ATP sulfurylase (ATPS) that catalyzes the adenylation of sulfate producing adenosine 5'-phosphosulfate (APS) and diphosphate, the first enzymatic step in sulfur assimilation pathway. APS synthesis involves the formation of a high-energy phosphoric-sulfuric acid anhydride bond driven by GTP hydrolysis by CysN coupled to ATP hydrolysis by CysD. This is Sulfate adenylyltransferase subunit 2 from Pseudomonas savastanoi pv. phaseolicola (strain 1448A / Race 6) (Pseudomonas syringae pv. phaseolicola (strain 1448A / Race 6)).